A 344-amino-acid chain; its full sequence is MAP3K12-binding inhibitory protein 1 (344 aa).

A Phosphoserine modification is found at Ser91. Residues Lys94, Lys118, Lys129, Lys139, Lys153, and Lys235 each participate in a glycyl lysine isopeptide (Lys-Gly) (interchain with G-Cter in SUMO2) cross-link. Residues 172 to 344 form an interaction with MAP3K12 region; that stretch reads AEINENNVRE…AESMATHHLP (173 aa). The segment at 271 to 285 is leucine-zipper 1; sequence IYQRIKKLEDKILEL. Lys301 is subject to N6-acetyllysine; alternate. Lys301 is covalently cross-linked (Glycyl lysine isopeptide (Lys-Gly) (interchain with G-Cter in SUMO2); alternate). Glycyl lysine isopeptide (Lys-Gly) (interchain with G-Cter in SUMO2) cross-links involve residues Lys304 and Lys325. Positions 314–329 are leucine-zipper 2; sequence LAELDEKISALKQALL.

As to quaternary structure, component of the ADA2A-containing complex (ATAC), composed of KAT14, KAT2A, TADA2L, TADA3L, ZZ3, MBIP, WDR5, YEATS2, CCDC101 and DR1. In the complex, it probably interacts directly with KAT2A, KAT14 and WDR5. As to expression, ubiquitous. High expression seen in the heart and lung.

The protein localises to the nucleus. It is found in the cytoplasm. Its function is as follows. Inhibits the MAP3K12 activity to induce the activation of the JNK/SAPK pathway. Component of the ATAC complex, a complex with histone acetyltransferase activity on histones H3 and H4. This chain is MAP3K12-binding inhibitory protein 1 (MBIP), found in Homo sapiens (Human).